The chain runs to 388 residues: 1-deoxy-D-xylulose 5-phosphate reductoisomerase (388 aa).

NADPH is bound by residues Thr13, Gly14, Ser15, Ile16, Arg40, Asn41, and Asn124. A 1-deoxy-D-xylulose 5-phosphate-binding site is contributed by Lys125. Residue Glu126 participates in NADPH binding. Mn(2+) is bound at residue Asp150. 4 residues coordinate 1-deoxy-D-xylulose 5-phosphate: Ser151, Glu152, Ser176, and His199. Glu152 is a Mn(2+) binding site. Gly205 contacts NADPH. Residues Ser212, Asn217, Lys218, and Glu221 each contribute to the 1-deoxy-D-xylulose 5-phosphate site. Residue Glu221 participates in Mn(2+) binding.

It belongs to the DXR family. In terms of assembly, homodimer. Mg(2+) is required as a cofactor. The cofactor is Mn(2+). Requires Co(2+) as cofactor.

The enzyme catalyses 2-C-methyl-D-erythritol 4-phosphate + NADP(+) = 1-deoxy-D-xylulose 5-phosphate + NADPH + H(+). It participates in isoprenoid biosynthesis; isopentenyl diphosphate biosynthesis via DXP pathway; isopentenyl diphosphate from 1-deoxy-D-xylulose 5-phosphate: step 1/6. With respect to regulation, competitively inhibited by the antibiotic fosmidomycin. Functionally, catalyzes the NADPH-dependent rearrangement and reduction of 1-deoxy-D-xylulose-5-phosphate (DXP) to 2-C-methyl-D-erythritol 4-phosphate (MEP). Cannot use NADH instead of NADPH as the reducing agent. This chain is 1-deoxy-D-xylulose 5-phosphate reductoisomerase, found in Zymomonas mobilis subsp. mobilis (strain ATCC 31821 / ZM4 / CP4).